The following is a 172-amino-acid chain: Adenylate kinase isoenzyme 6 (172 aa).

ATP contacts are provided by Gly-13, Gly-15, Lys-16, Thr-17, and Thr-18. The NMPbind stretch occupies residues 33-56; sequence NVGDLAREGQLYDGYDEEYDCPIL. An LID region spans residues 108 to 118; the sequence is NRGYNEKKLKD. Residues Arg-109 and Lys-148 each coordinate ATP.

Belongs to the adenylate kinase family. AK6 subfamily. Monomer and homodimer. Interacts with small ribosomal subunit protein uS11. Not a structural component of 43S pre-ribosomes, but transiently interacts with them by binding to uS11. Interacts with COIL (via C-terminus).

Its subcellular location is the cytoplasm. The protein localises to the nucleus. The protein resides in the nucleoplasm. It is found in the cajal body. It carries out the reaction AMP + ATP = 2 ADP. It catalyses the reaction ATP + H2O = ADP + phosphate + H(+). In terms of biological role, broad-specificity nucleoside monophosphate (NMP) kinase that catalyzes the reversible transfer of the terminal phosphate group between nucleoside triphosphates and monophosphates. Also has ATPase activity. Involved in the late cytoplasmic maturation steps of the 40S ribosomal particles, specifically 18S rRNA maturation. While NMP activity is not required for ribosome maturation, ATPase activity is. Associates transiently with small ribosomal subunit protein uS11. ATP hydrolysis breaks the interaction with uS11. May temporarily remove uS11 from the ribosome to enable a conformational change of the ribosomal RNA that is needed for the final maturation step of the small ribosomal subunit. Its NMP activity may have a role in nuclear energy homeostasis. May be involved in regulation of Cajal body (CB) formation. The polypeptide is Adenylate kinase isoenzyme 6 (Bos taurus (Bovine)).